The following is a 663-amino-acid chain: Pyoverdine export ATP-binding/permease protein PvdT (663 aa).

Residues 11-250 enclose the ABC transporter domain; the sequence is IELRDIRKRY…PSAGVERHLQ (240 aa). 48–55 serves as a coordination point for ATP; sequence GASGSGKS. Helical transmembrane passes span 292 to 312, 545 to 565, 598 to 618, and 626 to 646; these read ALTLLGIIIGVASVVVMLAVG, IAAISLLVGGIGVMNIMLMTV, VVGGLAGIALALCIGGVLLLG, and LSAIVGAFSCALVTGLVFGFM.

This sequence belongs to the ABC transporter superfamily. Macrolide exporter (TC 3.A.1.122) family. As to quaternary structure, part of the tripartite efflux system PvdRT-OpmQ, which is composed of an inner membrane component with both ATPase and permease domains, PvdT, a periplasmic membrane fusion protein, PvdR, and an outer membrane component, OpmQ.

The protein resides in the cell inner membrane. In terms of biological role, part of the tripartite efflux system PvdRT-OpmQ required for the secretion into the extracellular milieu of the siderophore pyoverdine (PVD), which is involved in iron acquisition. This subunit binds PVD and drives its secretion by hydrolyzing ATP. The system is responsible for export of newly synthesized PVD after the final steps of biosynthesis have taken place in the periplasm. It is also responsible for recycling of PVD after internalization of ferri-PVD into the periplasm by the outer-membrane receptor FpvA and release of iron from PVD, thus making PVD available for new cycles of iron uptake. In addition, can expel unwanted metals complexed with PVD from the periplasm into the extracellular medium. The sequence is that of Pyoverdine export ATP-binding/permease protein PvdT from Pseudomonas aeruginosa (strain ATCC 15692 / DSM 22644 / CIP 104116 / JCM 14847 / LMG 12228 / 1C / PRS 101 / PAO1).